The chain runs to 302 residues: Homoserine O-acetyltransferase (302 aa).

The Acyl-thioester intermediate role is filled by C142. The substrate site is built by K163 and S192. H235 serves as the catalytic Proton acceptor. Residue E237 is part of the active site. Residue R249 coordinates substrate.

The protein belongs to the MetA family.

It is found in the cytoplasm. The enzyme catalyses L-homoserine + acetyl-CoA = O-acetyl-L-homoserine + CoA. It participates in amino-acid biosynthesis; L-methionine biosynthesis via de novo pathway; O-acetyl-L-homoserine from L-homoserine: step 1/1. In terms of biological role, transfers an acetyl group from acetyl-CoA to L-homoserine, forming acetyl-L-homoserine. This is Homoserine O-acetyltransferase from Bacillus pumilus (strain SAFR-032).